Consider the following 91-residue polypeptide: Acylphosphatase (91 aa).

In terms of domain architecture, Acylphosphatase-like spans 3–91; it reads CLKAVVKGKV…GNYGDFHIKY (89 aa). Residues arginine 18 and asparagine 36 contribute to the active site.

The protein belongs to the acylphosphatase family.

The catalysed reaction is an acyl phosphate + H2O = a carboxylate + phosphate + H(+). This is Acylphosphatase (acyP) from Dehalococcoides mccartyi (strain ATCC BAA-2266 / KCTC 15142 / 195) (Dehalococcoides ethenogenes (strain 195)).